The following is a 251-amino-acid chain: 3-deoxy-manno-octulosonate cytidylyltransferase (251 aa).

It belongs to the KdsB family.

Its subcellular location is the cytoplasm. It catalyses the reaction 3-deoxy-alpha-D-manno-oct-2-ulosonate + CTP = CMP-3-deoxy-beta-D-manno-octulosonate + diphosphate. It participates in nucleotide-sugar biosynthesis; CMP-3-deoxy-D-manno-octulosonate biosynthesis; CMP-3-deoxy-D-manno-octulosonate from 3-deoxy-D-manno-octulosonate and CTP: step 1/1. The protein operates within bacterial outer membrane biogenesis; lipopolysaccharide biosynthesis. Functionally, activates KDO (a required 8-carbon sugar) for incorporation into bacterial lipopolysaccharide in Gram-negative bacteria. This is 3-deoxy-manno-octulosonate cytidylyltransferase from Chelativorans sp. (strain BNC1).